The chain runs to 436 residues: Methylenetetrahydrofolate--tRNA-(uracil-5-)-methyltransferase TrmFO (436 aa).

10-15 contacts FAD; sequence GAGLAG.

This sequence belongs to the MnmG family. TrmFO subfamily. FAD is required as a cofactor.

It is found in the cytoplasm. The enzyme catalyses uridine(54) in tRNA + (6R)-5,10-methylene-5,6,7,8-tetrahydrofolate + NADH + H(+) = 5-methyluridine(54) in tRNA + (6S)-5,6,7,8-tetrahydrofolate + NAD(+). It catalyses the reaction uridine(54) in tRNA + (6R)-5,10-methylene-5,6,7,8-tetrahydrofolate + NADPH + H(+) = 5-methyluridine(54) in tRNA + (6S)-5,6,7,8-tetrahydrofolate + NADP(+). Its function is as follows. Catalyzes the folate-dependent formation of 5-methyl-uridine at position 54 (M-5-U54) in all tRNAs. This chain is Methylenetetrahydrofolate--tRNA-(uracil-5-)-methyltransferase TrmFO, found in Staphylococcus carnosus (strain TM300).